Reading from the N-terminus, the 228-residue chain is 2-C-methyl-D-erythritol 4-phosphate cytidylyltransferase (228 aa).

This sequence belongs to the IspD/TarI cytidylyltransferase family. IspD subfamily.

The catalysed reaction is 2-C-methyl-D-erythritol 4-phosphate + CTP + H(+) = 4-CDP-2-C-methyl-D-erythritol + diphosphate. The protein operates within isoprenoid biosynthesis; isopentenyl diphosphate biosynthesis via DXP pathway; isopentenyl diphosphate from 1-deoxy-D-xylulose 5-phosphate: step 2/6. In terms of biological role, catalyzes the formation of 4-diphosphocytidyl-2-C-methyl-D-erythritol from CTP and 2-C-methyl-D-erythritol 4-phosphate (MEP). This Trichormus variabilis (strain ATCC 29413 / PCC 7937) (Anabaena variabilis) protein is 2-C-methyl-D-erythritol 4-phosphate cytidylyltransferase.